The sequence spans 574 residues: Sorting nexin-33 (574 aa).

The SH3 domain occupies methionine 1 to proline 61. Serine 77 carries the post-translational modification Phosphoserine. The segment covering glycine 79 to methionine 90 has biased composition (polar residues). Residues glycine 79–aspartate 116 form a disordered region. Serine 92 carries the phosphoserine modification. Positions phenylalanine 230–glutamine 340 constitute a PX domain. A BAR domain is found at leucine 371–leucine 574.

This sequence belongs to the sorting nexin family. Homodimer (via BAR domain). Interacts with ADAM15. Interacts with FASLG. Interacts (via SH3 domain) with DNM1 and DNM2. Interacts with WASL. Interacts with FCHSD1 (via the F-BAR domain). Post-translationally, phosphorylated. As to expression, detected in brain (at protein level).

Its subcellular location is the cytoplasm. The protein resides in the cytosol. The protein localises to the membrane. It localises to the cytoplasmic vesicle membrane. In terms of biological role, plays a role in the reorganization of the cytoskeleton, endocytosis and cellular vesicle trafficking via its interactions with membranes, WASL, DNM1 and DNM2. Acts both during interphase and at the end of mitotic cell divisions. Required for efficient progress through mitosis and cytokinesis. Required for normal formation of the cleavage furrow at the end of mitosis. Modulates endocytosis of cell-surface proteins, such as APP and PRNP; this then modulates the secretion of APP and PRNP peptides. Promotes membrane tubulation (in vitro). May promote the formation of macropinosomes. The chain is Sorting nexin-33 (Snx33) from Mus musculus (Mouse).